A 303-amino-acid polypeptide reads, in one-letter code: NAD kinase (303 aa).

Asp85 (proton acceptor) is an active-site residue. Residues Asp85–Gly86, Arg90, Asn159–Asp160, Lys187, Asp189, Ala224, and Gln259 each bind NAD(+).

This sequence belongs to the NAD kinase family. Requires a divalent metal cation as cofactor.

The protein localises to the cytoplasm. The catalysed reaction is NAD(+) + ATP = ADP + NADP(+) + H(+). In terms of biological role, involved in the regulation of the intracellular balance of NAD and NADP, and is a key enzyme in the biosynthesis of NADP. Catalyzes specifically the phosphorylation on 2'-hydroxyl of the adenosine moiety of NAD to yield NADP. This Bdellovibrio bacteriovorus (strain ATCC 15356 / DSM 50701 / NCIMB 9529 / HD100) protein is NAD kinase.